Here is a 1028-residue protein sequence, read N- to C-terminus: Kinesin-like protein KIF28 (1028 aa).

In terms of domain architecture, Kinesin motor spans 11 to 358 (SVRVAVRVRP…LRYAERAKKV (348 aa)). Position 114–121 (114–121 (GQTGSGKS)) interacts with ATP. In terms of domain architecture, FHA spans 460 to 523 (CDVGRAASNA…LQHLDRIILG (64 aa)). Residues 873-902 (NQVPELYQKLLKLEQETELLRDVNRALRGE) adopt a coiled-coil conformation.

It belongs to the TRAFAC class myosin-kinesin ATPase superfamily. Kinesin family.

The protein resides in the mitochondrion membrane. Microtubule-dependent motor protein required for mitochondrion morphology and transport of mitochondria in neuronal cells. This Mus musculus (Mouse) protein is Kinesin-like protein KIF28.